The sequence spans 128 residues: Fluoride-specific ion channel FluC (128 aa).

The next 4 membrane-spanning stretches (helical) occupy residues 4–24, 39–59, 71–91, and 99–119; these read LLLA…RYLI, GTLI…EFSM, FLTT…YETI, and MTLG…FVVI. G78 and T81 together coordinate Na(+).

Belongs to the fluoride channel Fluc/FEX (TC 1.A.43) family.

The protein localises to the cell membrane. It catalyses the reaction fluoride(in) = fluoride(out). With respect to regulation, na(+) is not transported, but it plays an essential structural role and its presence is essential for fluoride channel function. Fluoride-specific ion channel. Important for reducing fluoride concentration in the cell, thus reducing its toxicity. The chain is Fluoride-specific ion channel FluC from Clostridium perfringens (strain 13 / Type A).